A 434-amino-acid polypeptide reads, in one-letter code: Asparagine--tRNA ligase (434 aa).

The protein belongs to the class-II aminoacyl-tRNA synthetase family. In terms of assembly, homodimer.

It localises to the cytoplasm. It catalyses the reaction tRNA(Asn) + L-asparagine + ATP = L-asparaginyl-tRNA(Asn) + AMP + diphosphate + H(+). In Oenococcus oeni (strain ATCC BAA-331 / PSU-1), this protein is Asparagine--tRNA ligase.